The following is a 343-amino-acid chain: Anthranilate phosphoribosyltransferase (343 aa).

5-phospho-alpha-D-ribose 1-diphosphate contacts are provided by residues Gly-84, 87–88, Thr-92, 94–97, 112–120, and Ser-124; these read GD, NIST, and KHGNRGVSS. Gly-84 is an anthranilate binding site. Ser-96 is a binding site for Mg(2+). Residue Asn-115 participates in anthranilate binding. Arg-170 contacts anthranilate. Positions 229 and 230 each coordinate Mg(2+).

The protein belongs to the anthranilate phosphoribosyltransferase family. Homodimer. It depends on Mg(2+) as a cofactor.

It carries out the reaction N-(5-phospho-beta-D-ribosyl)anthranilate + diphosphate = 5-phospho-alpha-D-ribose 1-diphosphate + anthranilate. It functions in the pathway amino-acid biosynthesis; L-tryptophan biosynthesis; L-tryptophan from chorismate: step 2/5. In terms of biological role, catalyzes the transfer of the phosphoribosyl group of 5-phosphorylribose-1-pyrophosphate (PRPP) to anthranilate to yield N-(5'-phosphoribosyl)-anthranilate (PRA). The chain is Anthranilate phosphoribosyltransferase from Burkholderia ambifaria (strain MC40-6).